The following is a 542-amino-acid chain: Hydroxylamine reductase (542 aa).

Positions 5, 8, 17, and 23 each coordinate [4Fe-4S] cluster. Hybrid [4Fe-2O-2S] cluster-binding residues include H237, E261, C305, C397, C425, C450, E485, and K487. The residue at position 397 (C397) is a Cysteine persulfide.

This sequence belongs to the HCP family. Requires [4Fe-4S] cluster as cofactor. Hybrid [4Fe-2O-2S] cluster is required as a cofactor.

The protein resides in the cytoplasm. The catalysed reaction is A + NH4(+) + H2O = hydroxylamine + AH2 + H(+). Functionally, catalyzes the reduction of hydroxylamine to form NH(3) and H(2)O. The polypeptide is Hydroxylamine reductase (Acetivibrio thermocellus (strain ATCC 27405 / DSM 1237 / JCM 9322 / NBRC 103400 / NCIMB 10682 / NRRL B-4536 / VPI 7372) (Clostridium thermocellum)).